The chain runs to 434 residues: Histidinol dehydrogenase (434 aa).

Positions 130, 188, and 211 each coordinate NAD(+). Residues Ser237, Gln259, and His262 each coordinate substrate. Zn(2+) is bound by residues Gln259 and His262. Residues Glu326 and His327 each act as proton acceptor in the active site. His327, Asp360, Glu414, and His419 together coordinate substrate. Asp360 contributes to the Zn(2+) binding site. A Zn(2+)-binding site is contributed by His419.

Belongs to the histidinol dehydrogenase family. As to quaternary structure, homodimer. Zn(2+) serves as cofactor.

The enzyme catalyses L-histidinol + 2 NAD(+) + H2O = L-histidine + 2 NADH + 3 H(+). It participates in amino-acid biosynthesis; L-histidine biosynthesis; L-histidine from 5-phospho-alpha-D-ribose 1-diphosphate: step 9/9. Functionally, catalyzes the sequential NAD-dependent oxidations of L-histidinol to L-histidinaldehyde and then to L-histidine. This Salmonella typhi protein is Histidinol dehydrogenase.